The primary structure comprises 427 residues: Trigger factor (427 aa).

The region spanning 163-248 (GDTVVIDFVG…VNEVKAKELP (86 aa)) is the PPIase FKBP-type domain.

Belongs to the FKBP-type PPIase family. Tig subfamily.

The protein localises to the cytoplasm. The enzyme catalyses [protein]-peptidylproline (omega=180) = [protein]-peptidylproline (omega=0). Its function is as follows. Involved in protein export. Acts as a chaperone by maintaining the newly synthesized protein in an open conformation. Functions as a peptidyl-prolyl cis-trans isomerase. The sequence is that of Trigger factor from Lactococcus lactis subsp. cremoris (strain SK11).